The chain runs to 119 residues: MDKIVLEGCRFYGYHGAFKEEQTLGQIFLVDLELSVDLQAASLSDQLTDTVHYGIVFDSVRQLVEGGKFILIERLAGAICEQLFNEFPPIEAIKVAIKKENPPIAGHYKAVGIELERQR.

Substrate-binding positions include E21, Y53, and 72 to 73 (IE). Residue K99 is the Proton donor/acceptor of the active site.

The protein belongs to the DHNA family.

It carries out the reaction 7,8-dihydroneopterin = 6-hydroxymethyl-7,8-dihydropterin + glycolaldehyde. The protein operates within cofactor biosynthesis; tetrahydrofolate biosynthesis; 2-amino-4-hydroxy-6-hydroxymethyl-7,8-dihydropteridine diphosphate from 7,8-dihydroneopterin triphosphate: step 3/4. Functionally, catalyzes the conversion of 7,8-dihydroneopterin to 6-hydroxymethyl-7,8-dihydropterin. The protein is Dihydroneopterin aldolase (folB) of Streptococcus pyogenes serotype M3 (strain ATCC BAA-595 / MGAS315).